The primary structure comprises 255 residues: Small ribosomal subunit protein uS2 (255 aa).

Belongs to the universal ribosomal protein uS2 family.

The polypeptide is Small ribosomal subunit protein uS2 (Streptococcus thermophilus (strain CNRZ 1066)).